The sequence spans 228 residues: Uracil-DNA glycosylase (228 aa).

The Proton acceptor role is filled by Asp-64.

This sequence belongs to the uracil-DNA glycosylase (UDG) superfamily. UNG family.

It is found in the cytoplasm. It catalyses the reaction Hydrolyzes single-stranded DNA or mismatched double-stranded DNA and polynucleotides, releasing free uracil.. In terms of biological role, excises uracil residues from the DNA which can arise as a result of misincorporation of dUMP residues by DNA polymerase or due to deamination of cytosine. In Pectobacterium carotovorum subsp. carotovorum (strain PC1), this protein is Uracil-DNA glycosylase.